A 310-amino-acid chain; its full sequence is Ribonuclease Z (310 aa).

The Zn(2+) site is built by His-63, His-65, Asp-67, His-68, His-141, Asp-212, and His-270. The active-site Proton acceptor is the Asp-67.

This sequence belongs to the RNase Z family. As to quaternary structure, homodimer. Zn(2+) is required as a cofactor.

It catalyses the reaction Endonucleolytic cleavage of RNA, removing extra 3' nucleotides from tRNA precursor, generating 3' termini of tRNAs. A 3'-hydroxy group is left at the tRNA terminus and a 5'-phosphoryl group is left at the trailer molecule.. Zinc phosphodiesterase, which displays some tRNA 3'-processing endonuclease activity. Probably involved in tRNA maturation, by removing a 3'-trailer from precursor tRNA. This chain is Ribonuclease Z, found in Limosilactobacillus fermentum (strain NBRC 3956 / LMG 18251) (Lactobacillus fermentum).